We begin with the raw amino-acid sequence, 492 residues long: RNase aCSPSF2 (492 aa).

A divalent metal cation-binding residues include His130, His132, Asp134, His135, His213, Asp234, and His460.

Belongs to the metallo-beta-lactamase superfamily. RNA-metabolizing metallo-beta-lactamase-like family. The cofactor is Mg(2+).

A 5'-3' exoribonuclease, more active on 5'-monophosphorylated and 5'-hydroxylated RNA than 5'-tri-phosphorylated RNA; note there is no evidence for accumulation of 5'-monophosphorylated RNA in this organism. Translation initiation factor 2 subunit gamma but not subunit alpha protects 5'-tri-phosphorylated RNA from degradation by this enzyme. This is RNase aCSPSF2 from Saccharolobus solfataricus (strain ATCC 35092 / DSM 1617 / JCM 11322 / P2) (Sulfolobus solfataricus).